Reading from the N-terminus, the 231-residue chain is CD302 antigen (231 aa).

Positions 1-21 (MSAAVVATLPTLLLLLGLAAA) are cleaved as a signal peptide. The Extracellular portion of the chain corresponds to 22 to 169 (DCPSSSWVQF…YEKKYLPDHH (148 aa)). A C-type lectin domain is found at 31 to 153 (FQSNCYIFLQ…CEVSSVEGAL (123 aa)). Residue N110 is glycosylated (N-linked (GlcNAc...) asparagine). A disulfide bridge links C129 with C144. Residues 170–190 (ILITALVIASTTILTITGAVV) form a helical membrane-spanning segment. At 191–231 (WFLYKRNLTSGLTNTAYTTAPQLPYNDDCILVDAEENEYVA) the chain is on the cytoplasmic side.

Its subcellular location is the membrane. It is found in the cell projection. It localises to the filopodium. The protein resides in the cytoplasm. The protein localises to the cell cortex. Its subcellular location is the microvillus. Functionally, potential multifunctional C-type lectin receptor that may play roles in endocytosis and phagocytosis as well as in cell adhesion and migration. In Trichosurus vulpecula (Brush-tailed possum), this protein is CD302 antigen.